The primary structure comprises 141 residues: Hemoglobin subunit alpha (141 aa).

Residues 1-141 (VLSSDDKCNV…VSSVLTSKYR (141 aa)) enclose the Globin domain. His-58 lines the O2 pocket. Position 87 (His-87) interacts with heme b.

This sequence belongs to the globin family. As to quaternary structure, heterotetramer of two alpha chains and two beta chains. In terms of tissue distribution, red blood cells.

Functionally, involved in oxygen transport from the lung to the various peripheral tissues. Has antimicrobial activity against B.subtilis ATCC 6633. Has antioxidant activity. The chain is Hemoglobin subunit alpha from Crocodylus siamensis (Siamese crocodile).